A 155-amino-acid chain; its full sequence is Protein-export protein SecB (155 aa).

It belongs to the SecB family. In terms of assembly, homotetramer, a dimer of dimers. One homotetramer interacts with 1 SecA dimer.

It is found in the cytoplasm. Its function is as follows. One of the proteins required for the normal export of preproteins out of the cell cytoplasm. It is a molecular chaperone that binds to a subset of precursor proteins, maintaining them in a translocation-competent state. It also specifically binds to its receptor SecA. This Klebsiella pneumoniae subsp. pneumoniae (strain ATCC 700721 / MGH 78578) protein is Protein-export protein SecB.